Consider the following 282-residue polypeptide: 4-hydroxy-3-methylbut-2-enyl diphosphate reductase (282 aa).

Cys-14 contacts [4Fe-4S] cluster. Residues His-43 and His-78 each coordinate (2E)-4-hydroxy-3-methylbut-2-enyl diphosphate. The dimethylallyl diphosphate site is built by His-43 and His-78. Isopentenyl diphosphate-binding residues include His-43 and His-78. Cys-100 is a [4Fe-4S] cluster binding site. (2E)-4-hydroxy-3-methylbut-2-enyl diphosphate is bound at residue His-128. His-128 serves as a coordination point for dimethylallyl diphosphate. Position 128 (His-128) interacts with isopentenyl diphosphate. The active-site Proton donor is the Glu-130. A (2E)-4-hydroxy-3-methylbut-2-enyl diphosphate-binding site is contributed by Thr-164. Cys-192 serves as a coordination point for [4Fe-4S] cluster. Ser-220, Ser-221, Asn-222, and Ser-266 together coordinate (2E)-4-hydroxy-3-methylbut-2-enyl diphosphate. Dimethylallyl diphosphate contacts are provided by Ser-220, Ser-221, Asn-222, and Ser-266. Residues Ser-220, Ser-221, Asn-222, and Ser-266 each coordinate isopentenyl diphosphate.

It belongs to the IspH family. Requires [4Fe-4S] cluster as cofactor.

The enzyme catalyses isopentenyl diphosphate + 2 oxidized [2Fe-2S]-[ferredoxin] + H2O = (2E)-4-hydroxy-3-methylbut-2-enyl diphosphate + 2 reduced [2Fe-2S]-[ferredoxin] + 2 H(+). It catalyses the reaction dimethylallyl diphosphate + 2 oxidized [2Fe-2S]-[ferredoxin] + H2O = (2E)-4-hydroxy-3-methylbut-2-enyl diphosphate + 2 reduced [2Fe-2S]-[ferredoxin] + 2 H(+). Its pathway is isoprenoid biosynthesis; dimethylallyl diphosphate biosynthesis; dimethylallyl diphosphate from (2E)-4-hydroxy-3-methylbutenyl diphosphate: step 1/1. It participates in isoprenoid biosynthesis; isopentenyl diphosphate biosynthesis via DXP pathway; isopentenyl diphosphate from 1-deoxy-D-xylulose 5-phosphate: step 6/6. Its function is as follows. Catalyzes the conversion of 1-hydroxy-2-methyl-2-(E)-butenyl 4-diphosphate (HMBPP) into a mixture of isopentenyl diphosphate (IPP) and dimethylallyl diphosphate (DMAPP). Acts in the terminal step of the DOXP/MEP pathway for isoprenoid precursor biosynthesis. The chain is 4-hydroxy-3-methylbut-2-enyl diphosphate reductase from Clostridium perfringens (strain 13 / Type A).